Consider the following 239-residue polypeptide: 1-(5-phosphoribosyl)-5-[(5-phosphoribosylamino)methylideneamino] imidazole-4-carboxamide isomerase (239 aa).

Asp-8 serves as the catalytic Proton acceptor. Catalysis depends on Asp-129, which acts as the Proton donor.

This sequence belongs to the HisA/HisF family.

It is found in the cytoplasm. It catalyses the reaction 1-(5-phospho-beta-D-ribosyl)-5-[(5-phospho-beta-D-ribosylamino)methylideneamino]imidazole-4-carboxamide = 5-[(5-phospho-1-deoxy-D-ribulos-1-ylimino)methylamino]-1-(5-phospho-beta-D-ribosyl)imidazole-4-carboxamide. It participates in amino-acid biosynthesis; L-histidine biosynthesis; L-histidine from 5-phospho-alpha-D-ribose 1-diphosphate: step 4/9. The sequence is that of 1-(5-phosphoribosyl)-5-[(5-phosphoribosylamino)methylideneamino] imidazole-4-carboxamide isomerase from Bacillus cereus (strain AH187).